Consider the following 109-residue polypeptide: Large ribosomal subunit protein eL42 (109 aa).

Residues 23–53 (VSQYKKSKESTHAQGRRRYDMKQSGFGGQTK) form a disordered region. The span at 28 to 43 (KSKESTHAQGRRRYDM) shows a compositional bias: basic and acidic residues.

The protein belongs to the eukaryotic ribosomal protein eL42 family.

It is found in the cytoplasm. This Tetrahymena thermophila (strain SB210) protein is Large ribosomal subunit protein eL42 (RPL36A).